A 246-amino-acid polypeptide reads, in one-letter code: Small ribosomal subunit protein uS2 (246 aa).

The disordered stretch occupies residues 224–246 (AKQGEESAETEAKEAETTETTTA). The span at 225–239 (KQGEESAETEAKEAE) shows a compositional bias: basic and acidic residues.

Belongs to the universal ribosomal protein uS2 family.

This chain is Small ribosomal subunit protein uS2, found in Bacillus licheniformis (strain ATCC 14580 / DSM 13 / JCM 2505 / CCUG 7422 / NBRC 12200 / NCIMB 9375 / NCTC 10341 / NRRL NRS-1264 / Gibson 46).